The chain runs to 87 residues: Elastase inhibitor AFLEI (87 aa).

Positions methionine 1 to alanine 19 are cleaved as a signal peptide. Cysteine 24 and cysteine 86 are oxidised to a cystine.

It is found in the secreted. Its function is as follows. Elastase inhibitor. The protein is Elastase inhibitor AFLEI of Aspergillus fumigatus (strain CBS 144.89 / FGSC A1163 / CEA10) (Neosartorya fumigata).